We begin with the raw amino-acid sequence, 194 residues long: ATP synthase subunit b 1 (194 aa).

The chain crosses the membrane as a helical span at residues 1-21 (MLLGTVVTVLSTLPAIAYAMD).

This sequence belongs to the ATPase B chain family. In terms of assembly, F-type ATPases have 2 components, F(1) - the catalytic core - and F(0) - the membrane proton channel. F(1) has five subunits: alpha(3), beta(3), gamma(1), delta(1), epsilon(1). F(0) has three main subunits: a(1), b(2) and c(10-14). The alpha and beta chains form an alternating ring which encloses part of the gamma chain. F(1) is attached to F(0) by a central stalk formed by the gamma and epsilon chains, while a peripheral stalk is formed by the delta and b chains.

It is found in the cell inner membrane. Functionally, f(1)F(0) ATP synthase produces ATP from ADP in the presence of a proton or sodium gradient. F-type ATPases consist of two structural domains, F(1) containing the extramembraneous catalytic core and F(0) containing the membrane proton channel, linked together by a central stalk and a peripheral stalk. During catalysis, ATP synthesis in the catalytic domain of F(1) is coupled via a rotary mechanism of the central stalk subunits to proton translocation. In terms of biological role, component of the F(0) channel, it forms part of the peripheral stalk, linking F(1) to F(0). In Granulibacter bethesdensis (strain ATCC BAA-1260 / CGDNIH1), this protein is ATP synthase subunit b 1.